A 207-amino-acid chain; its full sequence is Large ribosomal subunit protein bL25 (207 aa).

Belongs to the bacterial ribosomal protein bL25 family. CTC subfamily. As to quaternary structure, part of the 50S ribosomal subunit; part of the 5S rRNA/L5/L18/L25 subcomplex. Contacts the 5S rRNA. Binds to the 5S rRNA independently of L5 and L18.

This is one of the proteins that binds to the 5S RNA in the ribosome where it forms part of the central protuberance. The chain is Large ribosomal subunit protein bL25 from Brucella abortus (strain S19).